The following is a 67-amino-acid chain: uncharacterized protein (67 aa).

This is an uncharacterized protein from Rickettsia prowazekii (strain Madrid E).